A 288-amino-acid polypeptide reads, in one-letter code: MDVTAKYELIGLMAYPIRHSLSPEMQNKALEKAGLPFTYMAFEVDNDSFPGAIEGLKALKMRGTGISMPNKQLACEYVDELTPAAKLVGAINTIVNDDGYLRGYNTDGTGHIRAIKESGFDIKGKTMVLLGAGGASTAIGAQGAIEGLKEIKLFNRRDEFFDKALAFAQRVNENTDCVVTVTDLADQQAFAEALASADILTNGTKVGMKPLENESLVNDISLLHPGLLVTECVYNPHMTKLLQQAQQAGCKTIDGYGMLLWQGAEQFTLWTGKDFPLEYVKQVMGFGA.

Substrate contacts are provided by K71 and D107. Residues 132 to 135, 155 to 158, K205, 232 to 235, and G255 contribute to the NAD(+) site; these read AGGA, NRRD, and CVYN.

It belongs to the shikimate dehydrogenase family. As to quaternary structure, homodimer.

The enzyme catalyses L-quinate + NAD(+) = 3-dehydroquinate + NADH + H(+). The catalysed reaction is L-quinate + NADP(+) = 3-dehydroquinate + NADPH + H(+). It catalyses the reaction shikimate + NADP(+) = 3-dehydroshikimate + NADPH + H(+). It carries out the reaction shikimate + NAD(+) = 3-dehydroshikimate + NADH + H(+). It functions in the pathway metabolic intermediate biosynthesis; chorismate biosynthesis; chorismate from D-erythrose 4-phosphate and phosphoenolpyruvate: step 4/7. The actual biological function of YdiB remains unclear, nor is it known whether 3-dehydroshikimate or quinate represents the natural substrate. Catalyzes the reversible NAD-dependent reduction of both 3-dehydroshikimate (DHSA) and 3-dehydroquinate to yield shikimate (SA) and quinate, respectively. It can use both NAD or NADP for catalysis, however it has higher catalytic efficiency with NAD. This chain is Quinate/shikimate dehydrogenase, found in Escherichia coli (strain 55989 / EAEC).